We begin with the raw amino-acid sequence, 516 residues long: Poly(U)-binding-splicing factor PUF60-B (516 aa).

2 RRM domains span residues 86–164 and 183–261; these read CRVY…RPGS and NRIY…KAVT. The segment at 356-398 is disordered; it reads TAPASMGTPTSAVQLHTEVKREEDSRRTAEDHSAPVGNGQDSE. Residues 372–388 are compositionally biased toward basic and acidic residues; the sequence is TEVKREEDSRRTAEDHS. Residues 419–506 form the RRM 3; atypical domain; the sequence is TVMVLRNMVG…RKVVAELYDQ (88 aa).

The protein belongs to the RRM half pint family.

It is found in the nucleus. DNA- and RNA-binding protein, involved in transcription repression and pre-mRNA splicing. In Danio rerio (Zebrafish), this protein is Poly(U)-binding-splicing factor PUF60-B (puf60b).